The primary structure comprises 289 residues: NAC domain-containing protein 2 (289 aa).

An NAC domain is found at 7-158; it reads LPPGFRFHPT…DWVLCRIYNK (152 aa).

As to quaternary structure, interacts with KIN10 and KIN11.

The protein localises to the nucleus. The chain is NAC domain-containing protein 2 (NAC002) from Arabidopsis thaliana (Mouse-ear cress).